Reading from the N-terminus, the 591-residue chain is L-gulonolactone oxidase 2 (591 aa).

The signal sequence occupies residues 1–27 (MAFTFPPSYRTLVGLYYIFTLMHTAVS). Residues 56-238 (STCRAANVAY…SQVTFELQPM (183 aa)) form the FAD-binding PCMH-type domain.

It belongs to the oxygen-dependent FAD-linked oxidoreductase family. FAD serves as cofactor.

The catalysed reaction is L-gulono-1,4-lactone + O2 = L-ascorbate + H2O2 + H(+). The protein operates within cofactor biosynthesis; L-ascorbate biosynthesis. Its function is as follows. Catalyzes the oxidation of L-gulono-1,4-lactone to ascorbic acid. L-gulono-1,4-lactone is oxidized to hydrogen peroxide and L-xylo-hexulonolactone which spontaneously isomerizes to L-ascorbate. The protein is L-gulonolactone oxidase 2 of Arabidopsis thaliana (Mouse-ear cress).